The sequence spans 73 residues: MSSFYTVVGVFIVVSAMSVLFWIMAPKNNQAVWRSTVILTLAMMFLMWAITFLCQLHPLVAPRRSDLRPEFAE.

Over 1–3 (MSS) the chain is Lumenal. A helical membrane pass occupies residues 4-24 (FYTVVGVFIVVSAMSVLFWIM). Over 25-35 (APKNNQAVWRS) the chain is Cytoplasmic. The helical transmembrane segment at 36 to 56 (TVILTLAMMFLMWAITFLCQL) threads the bilayer. Topologically, residues 57-73 (HPLVAPRRSDLRPEFAE) are lumenal.

This sequence belongs to the V-ATPase e1/e2 subunit family. In terms of assembly, V-ATPase is a heteromultimeric enzyme composed of a peripheral catalytic V1 complex (components A to H) attached to an integral membrane V0 proton pore complex (components: a, c, c', c'', d, e, f and VOA1).

The protein resides in the vacuole membrane. Subunit of the V0 complex of vacuolar(H+)-ATPase (V-ATPase), a multisubunit enzyme composed of a peripheral complex (V1) that hydrolyzes ATP and a membrane integral complex (V0) that translocates protons. V-ATPase is responsible for acidifying and maintaining the pH of intracellular compartments. This Saccharomyces cerevisiae (strain ATCC 204508 / S288c) (Baker's yeast) protein is V-type proton ATPase subunit e (VMA9).